The following is a 215-amino-acid chain: Histone-like protein 18C (215 aa).

Residues Cys140 to Met215 form a disordered region. Basic residues-rich tracts occupy residues Ser149–Lys190 and Ala197–Met215.

In terms of biological role, not known. Encoded in the intron of cAMP-dependent protein kinase regulatory chain type I. This is Histone-like protein 18C (Mst77F) from Drosophila melanogaster (Fruit fly).